Here is a 517-residue protein sequence, read N- to C-terminus: Crotonobetaine/carnitine--CoA ligase (517 aa).

It belongs to the ATP-dependent AMP-binding enzyme family.

The catalysed reaction is 4-(trimethylamino)butanoate + ATP + CoA = 4-(trimethylamino)butanoyl-CoA + AMP + diphosphate. The enzyme catalyses crotonobetaine + ATP + CoA = crotonobetainyl-CoA + AMP + diphosphate. It carries out the reaction (R)-carnitine + ATP + CoA = (R)-carnitinyl-CoA + AMP + diphosphate. The protein operates within amine and polyamine metabolism; carnitine metabolism. Catalyzes the transfer of CoA to carnitine, generating the initial carnitinyl-CoA needed for the CaiB reaction cycle. Also has activity toward crotonobetaine and gamma-butyrobetaine. In Shigella sonnei (strain Ss046), this protein is Crotonobetaine/carnitine--CoA ligase.